The sequence spans 540 residues: Phosphoenolpyruvate carboxykinase (ATP) (540 aa).

Residue Arg-65 coordinates substrate. N6-acetyllysine is present on Lys-87. Positions 207 and 213 each coordinate substrate. ATP-binding positions include Lys-213, His-232, and 248–256; that span reads GLSGTGKTT. Lys-213 and His-232 together coordinate Mn(2+). Asp-269 contributes to the Mn(2+) binding site. Residues Glu-297, Arg-333, 449-450, and Thr-455 each bind ATP; that span reads RI. Position 333 (Arg-333) interacts with substrate. Residue Lys-523 is modified to N6-acetyllysine.

This sequence belongs to the phosphoenolpyruvate carboxykinase (ATP) family. Monomer. It depends on Mn(2+) as a cofactor.

The protein resides in the cytoplasm. The catalysed reaction is oxaloacetate + ATP = phosphoenolpyruvate + ADP + CO2. It participates in carbohydrate biosynthesis; gluconeogenesis. Involved in the gluconeogenesis. Catalyzes the conversion of oxaloacetate (OAA) to phosphoenolpyruvate (PEP) through direct phosphoryl transfer between the nucleoside triphosphate and OAA. This is Phosphoenolpyruvate carboxykinase (ATP) from Escherichia coli O6:H1 (strain CFT073 / ATCC 700928 / UPEC).